The chain runs to 764 residues: MTTAHILGFPRIGAQRELKFALERYWRDGASADAERALVDTGRALRAEHWRIERDAGLDCVTVGDFAWYDHVLTTLAHVGGLPRRFGFDARALTLADYFAAARGNAAQPAMEMTKWFDTNYHYLVPEYSPATTFGPGVEWLFDEVREARALGYRAKAALVGPLTLLWLGKARDGLVERLALLPRLVPAYRALLARLREAGVDWVQIEEPIFSLDLPDAWRDAARPTYEALAPGAPKLLVATYFDDASEHAALLKALPVAGLHIDLVRADAQLDAFVADYPADKVLSCGIVDGRNVWRNDLDRSLARLAPVRDALGERLWVATSCSLLHVPVDLAHEPRLDEELKTWLAFAAQKTREVAALRDALVKGRAAVAAEFDDAAAAAAARRTSARIHNPLVKRRVAALTDADARRASAYSVRAAAQRARFGLPLLPTTTIGSFPQTPEIRRARAAFKQGVLDHLGYLEAMREQVRIAIDKQLAYGLDVLVHGEAERNDMVEYFGELLWGFAITSNGWVQSYGSRCVKPPLVYGDVYLPEPMTVGWASYAQSLSAKPVKGMLTGPVTMLQWSFVRDDQPRATTALQIALALRQETLDLEKAGIGMIQIDEPALREGLPLKARERAAYLDWAVRAFGIAASGVADDTQIHTHMCYSEFGDILPSIAALDADVISIETTRSNMELLDAFETFDYPNEIGPGVYDIHSPRVPDADEIERLILLALERIPAQRLWVNPDCGLKTREWRQVDAALAAMVDAAKRVRQKVEEEAPA.

Residues 16–19 (RELK) and lysine 115 each bind 5-methyltetrahydropteroyltri-L-glutamate. Residues 435–437 (IGS) and glutamate 488 contribute to the L-homocysteine site. Residues 435–437 (IGS) and glutamate 488 each bind L-methionine. Residues 519-520 (RC) and tryptophan 565 each bind 5-methyltetrahydropteroyltri-L-glutamate. Aspartate 603 provides a ligand contact to L-homocysteine. Residue aspartate 603 coordinates L-methionine. Glutamate 609 provides a ligand contact to 5-methyltetrahydropteroyltri-L-glutamate. Histidine 645, cysteine 647, and glutamate 669 together coordinate Zn(2+). Histidine 698 acts as the Proton donor in catalysis. Cysteine 730 contacts Zn(2+).

This sequence belongs to the vitamin-B12 independent methionine synthase family. Zn(2+) is required as a cofactor.

It catalyses the reaction 5-methyltetrahydropteroyltri-L-glutamate + L-homocysteine = tetrahydropteroyltri-L-glutamate + L-methionine. It functions in the pathway amino-acid biosynthesis; L-methionine biosynthesis via de novo pathway; L-methionine from L-homocysteine (MetE route): step 1/1. Functionally, catalyzes the transfer of a methyl group from 5-methyltetrahydrofolate to homocysteine resulting in methionine formation. The protein is 5-methyltetrahydropteroyltriglutamate--homocysteine methyltransferase of Burkholderia pseudomallei (strain K96243).